A 474-amino-acid polypeptide reads, in one-letter code: Phosphomannomutase (474 aa).

The active-site Phosphoserine intermediate is the Ser101. Positions 101, 242, 244, and 246 each coordinate Mg(2+).

Belongs to the phosphohexose mutase family. It depends on Mg(2+) as a cofactor.

The catalysed reaction is alpha-D-mannose 1-phosphate = D-mannose 6-phosphate. In Sinorhizobium fredii (strain NBRC 101917 / NGR234), this protein is Phosphomannomutase (noeK).